A 277-amino-acid chain; its full sequence is NLP effector protein Pc109095 (277 aa).

The N-terminal stretch at Met-1–Gly-19 is a signal peptide. The Hepta-peptide GHRHDWE motif signature appears at Arg-119–Ala-125. An N-linked (GlcNAc...) asparagine glycan is attached at Asn-199.

It belongs to the Necrosis inducing protein (NPP1) family.

The protein localises to the secreted. In terms of biological role, secreted effector that contributes strongly to virulence during infection by P.capsici. The polypeptide is NLP effector protein Pc109095 (Phytophthora capsici).